Consider the following 464-residue polypeptide: tRNA modification GTPase MnmE (464 aa).

(6S)-5-formyl-5,6,7,8-tetrahydrofolate-binding residues include Arg-25, Glu-87, and Lys-130. Positions 226–386 constitute a TrmE-type G domain; the sequence is GLSVVLAGQP…LRAELLRIAG (161 aa). Asn-236 lines the K(+) pocket. GTP is bound by residues 236 to 241, 255 to 261, and 280 to 283; these read NVGKSS, TPIAGTT, and DTAG. Position 240 (Ser-240) interacts with Mg(2+). Residues Thr-255, Ile-257, and Thr-260 each coordinate K(+). Thr-261 is a binding site for Mg(2+). (6S)-5-formyl-5,6,7,8-tetrahydrofolate is bound at residue Lys-464.

This sequence belongs to the TRAFAC class TrmE-Era-EngA-EngB-Septin-like GTPase superfamily. TrmE GTPase family. In terms of assembly, homodimer. Heterotetramer of two MnmE and two MnmG subunits. The cofactor is K(+).

Its subcellular location is the cytoplasm. Its function is as follows. Exhibits a very high intrinsic GTPase hydrolysis rate. Involved in the addition of a carboxymethylaminomethyl (cmnm) group at the wobble position (U34) of certain tRNAs, forming tRNA-cmnm(5)s(2)U34. The polypeptide is tRNA modification GTPase MnmE (Burkholderia orbicola (strain MC0-3)).